The primary structure comprises 153 residues: Ribosome maturation factor RimP (153 aa).

This sequence belongs to the RimP family.

The protein localises to the cytoplasm. Its function is as follows. Required for maturation of 30S ribosomal subunits. The chain is Ribosome maturation factor RimP from Picosynechococcus sp. (strain ATCC 27264 / PCC 7002 / PR-6) (Agmenellum quadruplicatum).